The following is a 313-amino-acid chain: Porphobilinogen deaminase (313 aa).

Cys242 is subject to S-(dipyrrolylmethanemethyl)cysteine.

Belongs to the HMBS family. Monomer. Requires dipyrromethane as cofactor.

It carries out the reaction 4 porphobilinogen + H2O = hydroxymethylbilane + 4 NH4(+). It functions in the pathway porphyrin-containing compound metabolism; protoporphyrin-IX biosynthesis; coproporphyrinogen-III from 5-aminolevulinate: step 2/4. Tetrapolymerization of the monopyrrole PBG into the hydroxymethylbilane pre-uroporphyrinogen in several discrete steps. The chain is Porphobilinogen deaminase from Pectobacterium atrosepticum (strain SCRI 1043 / ATCC BAA-672) (Erwinia carotovora subsp. atroseptica).